We begin with the raw amino-acid sequence, 238 residues long: Ribonuclease HII (238 aa).

Residues 23–215 enclose the RNase H type-2 domain; it reads QRLCGVDEAG…VREALARLPM (193 aa). Residues D29, E30, and D124 each contribute to the a divalent metal cation site.

It belongs to the RNase HII family. Requires Mn(2+) as cofactor. Mg(2+) serves as cofactor.

It is found in the cytoplasm. It catalyses the reaction Endonucleolytic cleavage to 5'-phosphomonoester.. Endonuclease that specifically degrades the RNA of RNA-DNA hybrids. The polypeptide is Ribonuclease HII (Cupriavidus necator (strain ATCC 17699 / DSM 428 / KCTC 22496 / NCIMB 10442 / H16 / Stanier 337) (Ralstonia eutropha)).